Here is a 310-residue protein sequence, read N- to C-terminus: uncharacterized protein (310 aa).

This is an uncharacterized protein from Acanthamoeba polyphaga (Amoeba).